We begin with the raw amino-acid sequence, 88 residues long: MTILASISSIGNVKSISKSNNFSSLSNSSLQSSNSIQCGCGGGSPLIGTVGNLVGGVLVGTGIILGTVVGTVNGVVGGLLSGPNCGCH.

It belongs to the hssA/B family.

The sequence is that of HssA/B-like protein 11 (hssl11) from Dictyostelium discoideum (Social amoeba).